Reading from the N-terminus, the 46-residue chain is NALFILGNIGNNDVNYAFPDRAIEEIRFYVPFITEAVANATREIIR.

N39 is a glycosylation site (N-linked (GlcNAc...) asparagine).

The protein belongs to the 'GDSL' lipolytic enzyme family.

It catalyses the reaction 17-O-acetylajmaline + H2O = ajmaline + acetate + H(+). It carries out the reaction 17-O-acetylnorajmaline + H2O = norajmaline + acetate + H(+). Deacetylates 17-O-acetylajmaline and 17-O-acetylnorajmaline, but is inactive toward other acetylated alkaloids. The protein is Acetylajmalan esterase of Rauvolfia verticillata (Common devil-pepper).